A 935-amino-acid chain; its full sequence is Disintegrin and metalloproteinase domain-containing protein 22 (935 aa).

The signal sequence occupies residues M1 to A24. Residues S25–R227 constitute a propeptide that is removed on maturation. N167 and N210 each carry an N-linked (GlcNAc...) asparagine glycan. The Extracellular portion of the chain corresponds to Q228 to N736. The Peptidase M12B domain occupies K241 to P440. 17 disulfides stabilise this stretch: C351–C435, C394–C419, C396–C403, C449–C479, C460–C476, C462–C468, C475–C496, C487–C493, C492–C518, C505–C525, C512–C544, C537–C549, C556–C607, C571–C637, C585–C595, C602–C665, and C659–C670. A Disintegrin domain is found at P446–D533. N521 is a glycosylation site (N-linked (GlcNAc...) asparagine). N-linked (GlcNAc...) asparagine glycosylation is found at N609 and N636. An N-linked (GlcNAc...) asparagine glycan is attached at N677. The EGF-like domain maps to N677 to S713. Disulfide bonds link C681–C695, C689–C701, and C703–C712. The chain crosses the membrane as a helical span at residues I737–A757. Residues W758 to I935 are Cytoplasmic-facing. A disordered region spans residues V850–I935. Residues P859–S870 are compositionally biased toward polar residues. Residues S871 to P882 show a composition bias toward basic residues. A compositionally biased stretch (low complexity) spans S891 to S906.

In terms of processing, the precursor is cleaved by a furin endopeptidase. Low levels in adult tissues. Not detected in developing embryos.

It is found in the cell membrane. Functionally, probable ligand for integrin in the brain. This is a non catalytic metalloprotease-like protein. The polypeptide is Disintegrin and metalloproteinase domain-containing protein 22 (adam22) (Xenopus laevis (African clawed frog)).